The sequence spans 343 residues: Cyclin-Y-like protein 1 (343 aa).

The interval 1 to 48 (MGNTVTCCVSPDASPKAGRDRAVTERGEPYQAQVELQETDPGPHLQHI) is disordered. Positions 17–28 (AGRDRAVTERGE) are enriched in basic and acidic residues. The 123-residue stretch at 145–267 (EIFDEKLHPL…FLELLQFNIN (123 aa)) folds into the Cyclin N-terminal domain.

The protein belongs to the cyclin family. Cyclin Y subfamily.

The protein localises to the cell membrane. Key regulator of Wnt signaling implicated in various biological processes, such as embryonic neurogenesis. This chain is Cyclin-Y-like protein 1 (ccnyl1), found in Xenopus tropicalis (Western clawed frog).